Here is a 258-residue protein sequence, read N- to C-terminus: Cytochrome b-c1 complex subunit Rieske-1, mitochondrial (258 aa).

A mitochondrion-targeting transit peptide spans 1-46 (WPVRSAAPSSSAFISANHFSSDDDSSSPRSISPSLASVFLHHTRGF). Topologically, residues 47 to 95 (SSNSVSPAHDMGLVPDLPPTVAAIKNPTSKIVYDEHNHERYPPGDPSKR) are mitochondrial matrix. Residues 96–118 (AFAYFVLTGGRFVYASLMRLLIL) traverse the membrane as a helical segment. Residues 119–258 (KFVLSMSASK…FLEENKLLIG (140 aa)) are Mitochondrial intermembrane-facing. A Rieske domain is found at 161–256 (RRRTEDDISL…YSFLEENKLL (96 aa)). Positions 201, 203, 220, and 223 each coordinate [2Fe-2S] cluster. The cysteines at positions 206 and 222 are disulfide-linked.

It belongs to the Rieske iron-sulfur protein family. As to quaternary structure, component of the ubiquinol-cytochrome c oxidoreductase (cytochrome b-c1 complex, complex III, CIII), a multisubunit enzyme composed of 3 respiratory subunits cytochrome b, cytochrome c1 and Rieske protein, 2 core protein subunits, and several low-molecular weight protein subunits. The complex exists as an obligatory dimer and forms supercomplexes (SCs) in the inner mitochondrial membrane with cytochrome c oxidase (complex IV, CIV). The cofactor is [2Fe-2S] cluster.

It is found in the mitochondrion inner membrane. It catalyses the reaction a quinol + 2 Fe(III)-[cytochrome c](out) = a quinone + 2 Fe(II)-[cytochrome c](out) + 2 H(+)(out). In terms of biological role, component of the ubiquinol-cytochrome c oxidoreductase, a multisubunit transmembrane complex that is part of the mitochondrial electron transport chain which drives oxidative phosphorylation. The respiratory chain contains 3 multisubunit complexes succinate dehydrogenase (complex II, CII), ubiquinol-cytochrome c oxidoreductase (cytochrome b-c1 complex, complex III, CIII) and cytochrome c oxidase (complex IV, CIV), that cooperate to transfer electrons derived from NADH and succinate to molecular oxygen, creating an electrochemical gradient over the inner membrane that drives transmembrane transport and the ATP synthase. The cytochrome b-c1 complex catalyzes electron transfer from ubiquinol to cytochrome c, linking this redox reaction to translocation of protons across the mitochondrial inner membrane, with protons being carried across the membrane as hydrogens on the quinol. In the process called Q cycle, 2 protons are consumed from the matrix, 4 protons are released into the intermembrane space and 2 electrons are passed to cytochrome c. The Rieske protein is a catalytic core subunit containing a [2Fe-2S] iron-sulfur cluster. It cycles between 2 conformational states during catalysis to transfer electrons from the quinol bound in the Q(0) site in cytochrome b to cytochrome c1. The polypeptide is Cytochrome b-c1 complex subunit Rieske-1, mitochondrial (Nicotiana tabacum (Common tobacco)).